A 535-amino-acid chain; its full sequence is Potassium channel subfamily K member 10 (535 aa).

Residues 1 to 68 (MYFSYIGYFF…GLQTVMKWKT (68 aa)) are Cytoplasmic-facing. The chain crosses the membrane as a helical span at residues 69-89 (VVAIFVVVVVYLVTGGLVFRA). Positions 151-177 (LGSAFFFAGTVITTIGYGNIAPSTEGG) form an intramembrane region, pore-forming. Residues threonine 164, isoleucine 165, glycine 166, and tyrosine 167 each contribute to the K(+) site. The segment at 164 to 169 (TIGYGN) is selectivity filter 1. The chain crosses the membrane as a helical span at residues 179–199 (IFCILYAIFGIPLFGFLLAGI). Topologically, residues 200–230 (GDQLGTIFGKSIARVEKVFRKKQVSQTKIRV) are cytoplasmic. The helical transmembrane segment at 231 to 251 (ISTILFILAGCIVFVTIPAVI) threads the bilayer. The segment at residues 260–291 (ALESIYFVVVTLTTVGFGDFVAGGNAGINYRE) is an intramembrane region (pore-forming). K(+) contacts are provided by threonine 273, valine 274, glycine 275, and phenylalanine 276. Positions 273–278 (TVGFGD) are selectivity filter 2. A helical transmembrane segment spans residues 296 to 316 (LVWFWILVGLAYFAAVLSMIG). Over 317–535 (DWLRVLSKKT…ENNSLLEDRN (219 aa)) the chain is Cytoplasmic. Disordered regions lie at residues 410–438 (QESINNRPNNLRLKGPEQLTKHGQGASED) and 510–535 (EMENGMVPTDTKDQGLENNSLLEDRN). Polar residues predominate over residues 525–535 (LENNSLLEDRN).

In terms of assembly, homodimer; disulfide-linked. Forms heterodimers with other 2-pore domain K(+) channel subunits, such as KCNK2, KCNK4 and KCNK18. Detected in dorsal root ganglia (DRG) neurons (at protein level).

The protein resides in the cell membrane. It carries out the reaction K(+)(in) = K(+)(out). The catalysed reaction is Rb(+)(in) = Rb(+)(out). The enzyme catalyses Cs(+)(in) = Cs(+)(out). Its activity is regulated as follows. Activated by stimuli such as mechanical stretch, acidic pH and polyunsaturated free fatty acids. Activated by a dihydroacridine analog, ML67-33. Inhibited by polycationic dye ruthenium red. Selectively activated by T2A3 (2-[(4-chloro-3-methylphenyl)amino] benzoic acid). Its function is as follows. K(+) channel that conducts voltage-dependent outward rectifying currents upon membrane depolarization. Voltage sensing is coupled to K(+) electrochemical gradient in an 'ion flux gating' mode where outward but not inward ion flow opens the gate. Converts to voltage-independent 'leak' conductance mode upon stimulation by various stimuli including mechanical membrane stretch, acidic pH, heat and lipids. Homo- and heterodimerizes to form functional channels with distinct regulatory and gating properties. In trigeminal ganglia sensory neurons, the heterodimer of KCNK10/TREK-2 and KCNK18/TRESK inhibits neuronal firing and neurogenic inflammation by stabilizing the resting membrane potential at K(+) equilibrium potential as well as by regulating the threshold of action potentials and the spike frequency. Permeable to other monovalent ions such as Rb(+) and Cs(+). This is Potassium channel subfamily K member 10 from Mus musculus (Mouse).